Reading from the N-terminus, the 324-residue chain is MNKIVLYLLVYGAVQCAAYDVLKAPNYFEDFLHKFNKSYSSESEKLRRFQIFRHNLEEIINKNHNDSTAQYEINKFADLSKDETISKYTGLSLPLQTQNFCEVVVLDRPPDKGPLEFDWRRLNKVTSVKNQGMCGACWAFATLGSLESQFAIKHNQFINLSEQQLIDCDFVDAGCDGGLLHTAFEAVMNMGGIQAESDYPYEANNGDCRANAAKFVVKVKKCYRYITVFEEKLKDLLRSVGPIPVAIDASDIVNYKRGIMKYCANHGLNHAVLLVGYAVENGVPFWILKNTWGADWGEQGYFRVQQNINACGIQNELPSSAEIY.

Positions 1–16 (MNKIVLYLLVYGAVQC) are cleaved as a signal peptide. A propeptide spans 17-113 (AAYDVLKAPN…VVLDRPPDKG (97 aa)) (activation peptide). Intrachain disulfides connect Cys134–Cys175, Cys168–Cys208, and Cys263–Cys311. The active site involves Cys137. N-linked (GlcNAc...) asparagine; by host glycosylation is present at Asn159. Residues His270 and Asn290 contribute to the active site.

This sequence belongs to the peptidase C1 family. Synthesized as an inactive proenzyme and activated by proteolytic removal of the inhibitory propeptide.

The enzyme catalyses Endopeptidase of broad specificity, hydrolyzing substrates of both cathepsin L and cathepsin B.. Its function is as follows. Cysteine protease that plays an essential role in host liquefaction to facilitate horizontal transmission of the virus. May participate in the degradation of foreign protein expressed by the baculovirus system. The chain is Viral cathepsin (Vcath) from Choristoneura fumiferana nuclear polyhedrosis virus (CfMNPV).